Reading from the N-terminus, the 761-residue chain is Phosphoribosylformylglycinamidine synthase subunit PurL (761 aa).

His-58 is an active-site residue. Residues Tyr-61 and Lys-105 each coordinate ATP. Residue Glu-107 participates in Mg(2+) binding. Substrate-binding positions include 108 to 111 (SHNH) and Arg-130. His-109 (proton acceptor) is an active-site residue. A Mg(2+)-binding site is contributed by Asp-131. Gln-259 lines the substrate pocket. Asp-287 contacts Mg(2+). Residue 331 to 333 (ESQ) coordinates substrate. Asn-519 and Gly-556 together coordinate ATP. Residue Asn-557 participates in Mg(2+) binding. Ser-559 lines the substrate pocket.

This sequence belongs to the FGAMS family. In terms of assembly, monomer. Part of the FGAM synthase complex composed of 1 PurL, 1 PurQ and 2 PurS subunits.

It localises to the cytoplasm. It catalyses the reaction N(2)-formyl-N(1)-(5-phospho-beta-D-ribosyl)glycinamide + L-glutamine + ATP + H2O = 2-formamido-N(1)-(5-O-phospho-beta-D-ribosyl)acetamidine + L-glutamate + ADP + phosphate + H(+). It participates in purine metabolism; IMP biosynthesis via de novo pathway; 5-amino-1-(5-phospho-D-ribosyl)imidazole from N(2)-formyl-N(1)-(5-phospho-D-ribosyl)glycinamide: step 1/2. Its function is as follows. Part of the phosphoribosylformylglycinamidine synthase complex involved in the purines biosynthetic pathway. Catalyzes the ATP-dependent conversion of formylglycinamide ribonucleotide (FGAR) and glutamine to yield formylglycinamidine ribonucleotide (FGAM) and glutamate. The FGAM synthase complex is composed of three subunits. PurQ produces an ammonia molecule by converting glutamine to glutamate. PurL transfers the ammonia molecule to FGAR to form FGAM in an ATP-dependent manner. PurS interacts with PurQ and PurL and is thought to assist in the transfer of the ammonia molecule from PurQ to PurL. This chain is Phosphoribosylformylglycinamidine synthase subunit PurL, found in Rhodococcus jostii (strain RHA1).